The following is a 184-amino-acid chain: Probable N-acetyltransferase san (184 aa).

In terms of domain architecture, N-acetyltransferase spans 6–155 (IELGDVTPHN…DAHVLQKTLR (150 aa)). Y31 is a binding site for substrate. N6-acetyllysine; by autocatalysis is present on K47. Y73 is an active-site residue. Residue M75 coordinates substrate. 77-90 (LGCLSPYRRLGIGT) serves as a coordination point for acetyl-CoA. H112 is a catalytic residue. Residue 117–126 (NNGAIEFYKK) participates in CoA binding. The tract at residues 138-141 (YYKR) is substrate. Residues 157–174 (TAPNSNSTATSTTANSNS) are compositionally biased toward low complexity. The interval 157–176 (TAPNSNSTATSTTANSNSRS) is disordered.

The protein belongs to the acetyltransferase family. Component of an acetyltransferase complex, at least composed of san, Ard1 and Nat1. Autoacetylated.

It localises to the cytoplasm. The catalysed reaction is N-terminal L-methionyl-L-alanyl-[protein] + acetyl-CoA = N-terminal N(alpha)-acetyl-L-methionyl-L-alanyl-[protein] + CoA + H(+). It catalyses the reaction N-terminal L-methionyl-L-seryl-[protein] + acetyl-CoA = N-terminal N(alpha)-acetyl-L-methionyl-L-seryl-[protein] + CoA + H(+). It carries out the reaction N-terminal L-methionyl-L-valyl-[protein] + acetyl-CoA = N-terminal N(alpha)-acetyl-L-methionyl-L-valyl-[protein] + CoA + H(+). The enzyme catalyses N-terminal L-methionyl-L-threonyl-[protein] + acetyl-CoA = N-terminal N(alpha)-acetyl-L-methionyl-L-threonyl-[protein] + CoA + H(+). The catalysed reaction is N-terminal L-methionyl-L-lysyl-[protein] + acetyl-CoA = N-terminal N(alpha)-acetyl-L-methionyl-L-lysyl-[protein] + CoA + H(+). It catalyses the reaction N-terminal L-methionyl-L-leucyl-[protein] + acetyl-CoA = N-terminal N(alpha)-acetyl-L-methionyl-L-leucyl-[protein] + CoA + H(+). It carries out the reaction N-terminal L-methionyl-L-phenylalanyl-[protein] + acetyl-CoA = N-terminal N(alpha)-acetyl-L-methionyl-L-phenylalanyl-[protein] + CoA + H(+). The enzyme catalyses N-terminal L-methionyl-L-tyrosyl-[protein] + acetyl-CoA = N-terminal N(alpha)-acetyl-L-methionyl-L-tyrosyl-[protein] + CoA + H(+). N-alpha-acetyltransferase that acetylates the N-terminus of proteins that retain their initiating methionine. Has a broad substrate specificity: able to acetylate the initiator methionine of most peptides. Also displays N-epsilon-acetyltransferase activity by mediating acetylation of the side chain of specific lysines on proteins. Autoacetylates. Required for the establishment of sister chromatid cohesion and couple the processes of cohesion and DNA replication to ensure that only sister chromatids become paired together. Required for the interaction between Scc1/vtd and SMC3, possibly by mediating N-terminal acetylation of Scc1/vtd. Functionally, (Microbial infection) Required for optimal replication of E.chaffeensis in the immune tissues, hemocytes, and fat body. The polypeptide is Probable N-acetyltransferase san (san) (Drosophila melanogaster (Fruit fly)).